A 247-amino-acid chain; its full sequence is Geranylgeranylglyceryl phosphate synthase (247 aa).

Mg(2+)-binding residues include aspartate 23 and serine 52. Sn-glycerol 1-phosphate is bound by residues 171–177, 203–204, and 225–226; these read YLEAGSG, GG, and GT.

This sequence belongs to the GGGP/HepGP synthase family. Group II subfamily. Mg(2+) serves as cofactor.

It is found in the cytoplasm. The enzyme catalyses sn-glycerol 1-phosphate + (2E,6E,10E)-geranylgeranyl diphosphate = sn-3-O-(geranylgeranyl)glycerol 1-phosphate + diphosphate. It functions in the pathway membrane lipid metabolism; glycerophospholipid metabolism. Prenyltransferase that catalyzes the transfer of the geranylgeranyl moiety of geranylgeranyl diphosphate (GGPP) to the C3 hydroxyl of sn-glycerol-1-phosphate (G1P). This reaction is the first ether-bond-formation step in the biosynthesis of archaeal membrane lipids. This is Geranylgeranylglyceryl phosphate synthase from Methanosarcina mazei (strain ATCC BAA-159 / DSM 3647 / Goe1 / Go1 / JCM 11833 / OCM 88) (Methanosarcina frisia).